A 301-amino-acid chain; its full sequence is Prohibitin-2 (301 aa).

2 necessary for transcriptional repression regions span residues 19 to 49 (MGTA…GHRA) and 150 to 174 (ASQL…RAKD). Residues 191-237 (REYTAAVESKQVAQQEAQRAQFLVEKAKQDQKQKIVQAEGEAAAAKM) are a coiled coil.

The protein belongs to the prohibitin family. In terms of assembly, the mitochondrial prohibitin complex consists of two subunits (PHB1 and PHB2), assembled into a membrane-associated ring-shaped supercomplex of approximately 1 mDa.

It localises to the mitochondrion inner membrane. The protein resides in the cytoplasm. Its subcellular location is the nucleus. The protein localises to the cell membrane. Protein with pleiotropic attributes mediated in a cell-compartment- and tissue-specific manner, which include the plasma membrane-associated cell signaling functions, mitochondrial chaperone, and transcriptional co-regulator of transcription factors and sex steroid hormones in the nucleus. Its function is as follows. In the mitochondria, together with PHB, forms large ring complexes (prohibitin complexes) in the inner mitochondrial membrane (IMM) and functions as a chaperone protein that stabilizes mitochondrial respiratory enzymes and maintains mitochondrial integrity in the IMM, which is required for mitochondrial morphogenesis, neuronal survival, and normal lifespan. In terms of biological role, in the nucleus, serves as transcriptional co-regulator. This Xenopus tropicalis (Western clawed frog) protein is Prohibitin-2 (phb2).